We begin with the raw amino-acid sequence, 587 residues long: Hatching enzyme (587 aa).

The first 18 residues, 1–18 (MANSGLILLVMFMIHVTT), serve as a signal peptide directing secretion. Positions 19-166 (VHNVPLPSTA…PRCGVPDVLP (148 aa)) are cleaved as a propeptide — activation peptide. N-linked (GlcNAc...) asparagine glycosylation is found at Asn64, Asn126, and Asn141. A Cysteine switch motif is present at residues 157–164 (PRCGVPDV). Zn(2+) contacts are provided by Cys159 and His283. Glu284 is an active-site residue. Zn(2+) is bound by residues His287 and His293. The disordered stretch occupies residues 325–382 (LYGSNSGSGTTTTTRRPTTTRATTTRRTTTTRATTTRATTTTTTSPSRPSPPRRACSG). The segment covering 334–371 (TTTTTRRPTTTRATTTRRTTTTRATTTRATTTTTTSPS) has biased composition (low complexity). The cysteines at positions 380 and 582 are disulfide-linked. Hemopexin repeat units lie at residues 381–422 (SGSF…RFGF), 425–468 (PQNI…WVGL), 469–513 (PCNI…FNDV), and 518–570 (HDGV…IPQC). Asn584 is a glycosylation site (N-linked (GlcNAc...) asparagine).

It belongs to the peptidase M10A family. The cofactor is Zn(2+).

It carries out the reaction Hydrolysis of proteins of the fertilization envelope and dimethylcasein.. Functionally, allows the sea urchin to digest the protective envelope derived from the egg extracellular matrix; thus allowing the sea urchin to swim freely. In Paracentrotus lividus (Common sea urchin), this protein is Hatching enzyme.